Consider the following 807-residue polypeptide: DNA gyrase subunit B (807 aa).

Residues 429–543 (SELFIVEGDS…KGYLYIAQPP (115 aa)) enclose the Toprim domain. Mg(2+) is bound by residues E435, D508, and D510.

This sequence belongs to the type II topoisomerase GyrB family. As to quaternary structure, heterotetramer, composed of two GyrA and two GyrB chains. In the heterotetramer, GyrA contains the active site tyrosine that forms a transient covalent intermediate with DNA, while GyrB binds cofactors and catalyzes ATP hydrolysis. Requires Mg(2+) as cofactor. The cofactor is Mn(2+). Ca(2+) is required as a cofactor.

It localises to the cytoplasm. It carries out the reaction ATP-dependent breakage, passage and rejoining of double-stranded DNA.. Functionally, a type II topoisomerase that negatively supercoils closed circular double-stranded (ds) DNA in an ATP-dependent manner to modulate DNA topology and maintain chromosomes in an underwound state. Negative supercoiling favors strand separation, and DNA replication, transcription, recombination and repair, all of which involve strand separation. Also able to catalyze the interconversion of other topological isomers of dsDNA rings, including catenanes and knotted rings. Type II topoisomerases break and join 2 DNA strands simultaneously in an ATP-dependent manner. This Rickettsia conorii (strain ATCC VR-613 / Malish 7) protein is DNA gyrase subunit B.